The primary structure comprises 273 residues: Zinc finger protein AZF2 (273 aa).

The tract at residues 33-64 (LKRKRSKRQRSHSPSSSSSSPPRSRPKSQNQD) is disordered. Over residues 34 to 43 (KRKRSKRQRS) the composition is skewed to basic residues. Residues 44-54 (HSPSSSSSSPP) show a composition bias toward low complexity. 2 C2H2-type zinc fingers span residues 106 to 128 (YKCN…KASH) and 165 to 187 (HECS…KRCH). Residues 195-215 (GGGGGSKSISHSGSVSSTVSE) form a disordered region. Over residues 201 to 213 (KSISHSGSVSSTV) the composition is skewed to low complexity.

Expressed in roots, radicles, cotyledons, hypocotyls, leaf veins, stems, sepals, petals, stamens, placenta, funiculi and maturated seeds.

It localises to the nucleus. Functionally, transcriptional repressor involved in the inhibition of plant growth under abiotic stress conditions. Can repress the expression of various genes, including osmotic stress and abscisic acid-repressive genes and auxin-inducible genes, by binding to their promoter regions in a DNA sequence-specific manner. Acts as a negative regulator of abscisic acid (ABA) signaling during seed germination. Probably involved in jasmonate (JA) early signaling response. May regulate the expression of the JA biosynthesis gene LOX3 and control the expression of TIFY10A/JAZ1, a key repressor in the JA signaling cascade. May act as a positive regulator of leaf senescence. Has been identified as a suppressor of the deficiency of yeast snf4 mutant to grow on non-fermentable carbon source. The sequence is that of Zinc finger protein AZF2 (AZF2) from Arabidopsis thaliana (Mouse-ear cress).